The chain runs to 1313 residues: Ataxin-2 (1313 aa).

The span at 1–12 (MRSAAAAPRSPA) shows a compositional bias: low complexity. The disordered stretch occupies residues 1 to 255 (MRSAAAAPRS…RNSNKGLPQS (255 aa)). Residues 48–65 (GPYPSAAPPPPGPGPPPS) are compositionally biased toward pro residues. Low complexity-rich tracts occupy residues 104 to 114 (FVVLLLPLASP), 141 to 154 (ARPA…ACEP), 166 to 187 (QQQQ…QQQQ), and 204 to 234 (LLAS…VAAT). The span at 235–244 (SGGGRPGLGR) shows a compositional bias: gly residues. Residue Ser-248 is modified to Phosphoserine. The 78-residue stretch at 267–344 (RMVHILTSVV…FVVVQFKDMD (78 aa)) folds into the Sm domain. Residues Ser-393, Ser-466, Ser-478, Ser-508, and Ser-554 each carry the phosphoserine modification. Composition is skewed to basic and acidic residues over residues 459 to 471 (ALEN…EEKY) and 478 to 492 (SSER…RENK). Disordered regions lie at residues 459 to 954 (ALEN…HQQP) and 1137 to 1219 (NATL…NSFP). Residues 508-544 (SGRQNSPRMGQPGSGSMPSRSTSHTSDFNPNSGSDQR) are compositionally biased toward polar residues. The span at 552–562 (WPSPCPSPSSR) shows a compositional bias: pro residues. The span at 563–581 (PPSRYQSGPNSLPPRAATP) shows a compositional bias: low complexity. The segment covering 582 to 598 (TRPPSRPPSRPSRPPSH) has biased composition (pro residues). Ser-624 is modified (phosphoserine). Positions 627-637 (AQRHPRNHRVS) are enriched in basic residues. Arg-640 is modified (asymmetric dimethylarginine; alternate). Arg-640 bears the Omega-N-methylarginine; alternate mark. The residue at position 642 (Ser-642) is a Phosphoserine. Positions 666-681 (TSPSGGTWSSVVSGVP) are enriched in low complexity. Position 684 is a phosphoserine (Ser-684). The span at 693–703 (PRQNSIGNTPS) shows a compositional bias: polar residues. A Phosphoserine modification is found at Ser-728. At Thr-741 the chain carries Phosphothreonine. The segment covering 768-777 (PNETSPSFSK) has biased composition (polar residues). Residues Ser-772 and Ser-784 each carry the phosphoserine modification. Residues 788 to 804 (SEHRKQIDDLKKFKNDF) show a composition bias toward basic and acidic residues. Positions 807–820 (QPSSTSESMDQLLN) are enriched in polar residues. A compositionally biased stretch (basic and acidic residues) spans 821 to 844 (KNREGEKSRDLIKDKIEPSAKDSF). Low complexity predominate over residues 847–871 (NSSSNCTSGSSKPNSPSISPSILSN). Phosphoserine is present on residues Ser-856, Ser-857, Ser-861, Ser-865, Ser-867, Ser-888, and Ser-889. Residues 880-891 (VTSQGVQTSSPA) show a composition bias toward polar residues. Lys-893 is covalently cross-linked (Glycyl lysine isopeptide (Lys-Gly) (interchain with G-Cter in SUMO2)). Residues 893–910 (KQEKDDKEEKKDAAEQVR) are compositionally biased toward basic and acidic residues. Low complexity-rich tracts occupy residues 925–936 (SFSQPKPSTTPT) and 1155–1192 (GQQQ…QQSA). Residues 1206–1219 (TPASNTQSPQNSFP) show a composition bias toward polar residues.

It belongs to the ataxin-2 family. As to quaternary structure, monomer. Can also form homodimers. Interacts with TARDBP; the interaction is RNA-dependent. Interacts with RBFOX1. Interacts with polyribosomes. Interacts with SH3GL2 and SH3GL3. Interacts with SH3KBP1 and CBL. Interacts with EGFR. Interacts with ATXN2L. Expressed in the brain, heart, liver, skeletal muscle, pancreas and placenta. Isoform 1 is predominant in the brain and spinal cord. Isoform 4 is more abundant in the cerebellum. In the brain, broadly expressed in the amygdala, caudate nucleus, corpus callosum, hippocampus, hypothalamus, substantia nigra, subthalamic nucleus and thalamus.

Its subcellular location is the cytoplasm. Involved in EGFR trafficking, acting as negative regulator of endocytic EGFR internalization at the plasma membrane. The polypeptide is Ataxin-2 (ATXN2) (Homo sapiens (Human)).